We begin with the raw amino-acid sequence, 217 residues long: Adenylate kinase (217 aa).

10-15 (GAGKGT) lines the ATP pocket. The segment at 30–59 (STGDMLRAAVKAESELGLQVKEVMASGGLV) is NMP. AMP is bound by residues Thr31, Arg36, 57-59 (GLV), 85-88 (GFPR), and Gln92. The tract at residues 122–159 (GRRVHEGSGRIYHVKYDPPKVEGKDDETGEALIQREDD) is LID. ATP-binding positions include Arg123 and 132-133 (IY). AMP-binding residues include Arg156 and Arg167. Gly203 contributes to the ATP binding site.

This sequence belongs to the adenylate kinase family. As to quaternary structure, monomer.

It localises to the cytoplasm. It carries out the reaction AMP + ATP = 2 ADP. Its pathway is purine metabolism; AMP biosynthesis via salvage pathway; AMP from ADP: step 1/1. Its function is as follows. Catalyzes the reversible transfer of the terminal phosphate group between ATP and AMP. Plays an important role in cellular energy homeostasis and in adenine nucleotide metabolism. This is Adenylate kinase from Marinobacter nauticus (strain ATCC 700491 / DSM 11845 / VT8) (Marinobacter aquaeolei).